The primary structure comprises 322 residues: Phospho-N-acetylmuramoyl-pentapeptide-transferase (322 aa).

The next 10 helical transmembrane spans lie at 9-29 (IALV…INFM), 54-74 (TMGG…VAAW), 82-102 (VWIL…DDGI), 122-142 (IIIA…FGLY), 145-165 (FAGV…WLVG), 176-196 (LDGL…YIAF), 200-220 (NFAV…FFIF), 227-247 (IFMG…VSIM), 255-275 (LLIG…VISF), and 302-322 (VDIV…AIWG).

Belongs to the glycosyltransferase 4 family. MraY subfamily. Mg(2+) serves as cofactor.

It localises to the cell membrane. The enzyme catalyses UDP-N-acetyl-alpha-D-muramoyl-L-alanyl-gamma-D-glutamyl-L-lysyl-D-alanyl-D-alanine + di-trans,octa-cis-undecaprenyl phosphate = Mur2Ac(oyl-L-Ala-gamma-D-Glu-L-Lys-D-Ala-D-Ala)-di-trans,octa-cis-undecaprenyl diphosphate + UMP. Its pathway is cell wall biogenesis; peptidoglycan biosynthesis. Functionally, catalyzes the initial step of the lipid cycle reactions in the biosynthesis of the cell wall peptidoglycan: transfers peptidoglycan precursor phospho-MurNAc-pentapeptide from UDP-MurNAc-pentapeptide onto the lipid carrier undecaprenyl phosphate, yielding undecaprenyl-pyrophosphoryl-MurNAc-pentapeptide, known as lipid I. This is Phospho-N-acetylmuramoyl-pentapeptide-transferase from Lactobacillus acidophilus (strain ATCC 700396 / NCK56 / N2 / NCFM).